The following is a 491-amino-acid chain: UDP-N-acetylmuramate--L-alanine ligase (491 aa).

126–132 (GTHGKTT) lines the ATP pocket.

The protein belongs to the MurCDEF family.

It localises to the cytoplasm. The enzyme catalyses UDP-N-acetyl-alpha-D-muramate + L-alanine + ATP = UDP-N-acetyl-alpha-D-muramoyl-L-alanine + ADP + phosphate + H(+). Its pathway is cell wall biogenesis; peptidoglycan biosynthesis. In terms of biological role, cell wall formation. The sequence is that of UDP-N-acetylmuramate--L-alanine ligase from Klebsiella pneumoniae (strain 342).